The primary structure comprises 197 residues: Ribosome maturation factor RimM (197 aa).

Positions 99 to 174 (EDEFYQVDLI…LVVEPVAAGL (76 aa)) constitute a PRC barrel domain.

The protein belongs to the RimM family. As to quaternary structure, binds ribosomal protein uS19.

Its subcellular location is the cytoplasm. In terms of biological role, an accessory protein needed during the final step in the assembly of 30S ribosomal subunit, possibly for assembly of the head region. Essential for efficient processing of 16S rRNA. May be needed both before and after RbfA during the maturation of 16S rRNA. It has affinity for free ribosomal 30S subunits but not for 70S ribosomes. This is Ribosome maturation factor RimM from Bartonella quintana (strain Toulouse) (Rochalimaea quintana).